The chain runs to 317 residues: Transcription factor elt-3 (317 aa).

The disordered stretch occupies residues 1 to 34; the sequence is METANYYLPSPPYSSTSSSDSRESRMNTPIPTTY. The GATA-type zinc finger occupies 244–268; sequence CSNCKTRETTLWRRNGEGGVECNAC. The disordered stretch occupies residues 290 to 317; that stretch reads KRNRRPRNESPNSAIRNTHQRHGHAAAC. The segment covering 307–317 has biased composition (basic residues); it reads THQRHGHAAAC.

As to quaternary structure, interacts with skn-1; interaction may enhance transcriptional activation of target genes. In terms of tissue distribution, expressed in head, trunk and tail. Expression decreases with age in the hypodermal cells and the pharyngeal-intestinal valve cells in the head, eventually showing little or no expression in about 14 day old worms. Expressed in hypodermal, but not in intestinal, cells at 1 day of age. Expression in the hypodermal and intestinal cells in the trunk region decreases quickly between day 3 and day 5 of adulthood. Expression in the tail between days 3 and 14 stays approximately uniform.

It localises to the nucleus. Its function is as follows. Transcription factor. Required, in concert with signal transducer and transcription factor sta-2, for up-regulation of the vacuolar H(+)-ATPase and acceleration of lysosome maturation at molt. Involved in regulating hypodermal development, perhaps acting downstream of transcription factor elt-1. Modulates environmentally induced changes in collagen gene expression, including rol-6, sqt-1, lon-3, and dpy-13. Involved in regulating expression of various genes, including gst-4, sod-3, ugt-9, and col-144. In response to oxidative stress, required to up-regulate expression of gst-4 mRNA. Regulated by the Insulin/IGF-1-like signaling (IIS) mediated pathway. Plays a role in longevity. May regulate the expression of genes that control sensitivity to osmotic stress, in conjunction with the GATA region-binding transcription factor elt-2. May form a transcriptional circuit with GATA factors egl-18 and elt-6. The chain is Transcription factor elt-3 from Caenorhabditis elegans.